Here is a 760-residue protein sequence, read N- to C-terminus: 5-methyltetrahydropteroyltriglutamate--homocysteine methyltransferase (760 aa).

5-methyltetrahydropteroyltri-L-glutamate contacts are provided by residues 17–20 (RELK) and Lys-113. L-homocysteine contacts are provided by residues 433 to 435 (IGS) and Glu-486. Residues 433-435 (IGS) and Glu-486 contribute to the L-methionine site. 5-methyltetrahydropteroyltri-L-glutamate-binding positions include 517–518 (RC) and Trp-563. Asp-601 contacts L-homocysteine. An L-methionine-binding site is contributed by Asp-601. Glu-607 provides a ligand contact to 5-methyltetrahydropteroyltri-L-glutamate. Zn(2+) contacts are provided by His-643, Cys-645, and Glu-667. His-696 serves as the catalytic Proton donor. A Zn(2+)-binding site is contributed by Cys-728.

Belongs to the vitamin-B12 independent methionine synthase family. It depends on Zn(2+) as a cofactor.

It carries out the reaction 5-methyltetrahydropteroyltri-L-glutamate + L-homocysteine = tetrahydropteroyltri-L-glutamate + L-methionine. The protein operates within amino-acid biosynthesis; L-methionine biosynthesis via de novo pathway; L-methionine from L-homocysteine (MetE route): step 1/1. Its function is as follows. Catalyzes the transfer of a methyl group from 5-methyltetrahydrofolate to homocysteine resulting in methionine formation. The sequence is that of 5-methyltetrahydropteroyltriglutamate--homocysteine methyltransferase from Chromobacterium violaceum (strain ATCC 12472 / DSM 30191 / JCM 1249 / CCUG 213 / NBRC 12614 / NCIMB 9131 / NCTC 9757 / MK).